The following is a 341-amino-acid chain: Dihydroorotate dehydrogenase (quinone) (341 aa).

FMN-binding positions include 62-66 (AGMDK) and T86. K66 is a binding site for substrate. 111-115 (NRMGF) lines the substrate pocket. Positions 139 and 172 each coordinate FMN. N172 lines the substrate pocket. S175 (nucleophile) is an active-site residue. Residue N177 participates in substrate binding. 2 residues coordinate FMN: K217 and T245. 246 to 247 (NT) lines the substrate pocket. FMN is bound by residues G268, G297, and 318–319 (YS).

The protein belongs to the dihydroorotate dehydrogenase family. Type 2 subfamily. As to quaternary structure, monomer. Requires FMN as cofactor.

The protein resides in the cell membrane. The catalysed reaction is (S)-dihydroorotate + a quinone = orotate + a quinol. Its pathway is pyrimidine metabolism; UMP biosynthesis via de novo pathway; orotate from (S)-dihydroorotate (quinone route): step 1/1. In terms of biological role, catalyzes the conversion of dihydroorotate to orotate with quinone as electron acceptor. This Shewanella loihica (strain ATCC BAA-1088 / PV-4) protein is Dihydroorotate dehydrogenase (quinone).